Consider the following 753-residue polypeptide: Synaptotagmin-like protein 5 (753 aa).

One can recognise a RabBD domain in the interval 7–123 (FINLSFLLDH…IISGEWFLEE (117 aa)). The segment at 64 to 106 (CVHCHKTLGLIFDRGDPCQACSLRVCSECRVTGLDGSWKCTVC) adopts an FYVE-type zinc-finger fold. 3 disordered regions span residues 145–279 (RRSP…SREH), 297–359 (LTKS…LNSL), and 380–404 (LASG…VPDA). Ser147 carries the post-translational modification Phosphoserine. Residues 150 to 174 (SEETQNQEQAQQCVDKSDTLSSVRQ) show a composition bias toward polar residues. A compositionally biased stretch (basic and acidic residues) spans 195-206 (TRGEIRTPKPES). Residues 214 to 223 (LDSQNLQSFK) are compositionally biased toward polar residues. Low complexity predominate over residues 224-237 (SASGSDRGSTTSSD). Positions 249-275 (KSSYSNGGIPVTQRSPVPSAHSVTSIN) are enriched in polar residues. Residues 380-391 (LASGLSTNSQAG) show a composition bias toward polar residues. C2 domains lie at 429–550 (VTGE…DEWF) and 597–717 (KRGK…VDWM).

In terms of assembly, binds RAB27A that has been activated by GTP-binding.

The protein localises to the membrane. Functionally, may act as Rab effector protein and play a role in vesicle trafficking. Binds phospholipids. This chain is Synaptotagmin-like protein 5 (Sytl5), found in Mus musculus (Mouse).